We begin with the raw amino-acid sequence, 1486 residues long: Chromosome partition protein MukB (1486 aa).

34–41 (GGNGAGKS) contributes to the ATP binding site. Coiled-coil stretches lie at residues 326 to 418 (LEAD…QYNQ), 444 to 480 (LETF…QAYQ), and 509 to 603 (RHLA…RAPV). The tract at residues 666–783 (PGGSEDQRLN…EVPLFGRAAR (118 aa)) is flexible hinge. Coiled-coil stretches lie at residues 835-923 (EAEI…AKLE), 977-1115 (EMLS…TAKA), and 1209-1266 (VEAI…QNVS).

It belongs to the SMC family. MukB subfamily. As to quaternary structure, homodimerization via its hinge domain. Binds to DNA via its C-terminal region. Interacts, and probably forms a ternary complex, with MukE and MukF via its C-terminal region. The complex formation is stimulated by calcium or magnesium. Interacts with tubulin-related protein FtsZ.

It localises to the cytoplasm. Its subcellular location is the nucleoid. Its function is as follows. Plays a central role in chromosome condensation, segregation and cell cycle progression. Functions as a homodimer, which is essential for chromosome partition. Involved in negative DNA supercoiling in vivo, and by this means organize and compact chromosomes. May achieve or facilitate chromosome segregation by condensation DNA from both sides of a centrally located replisome during cell division. In Escherichia coli (strain ATCC 8739 / DSM 1576 / NBRC 3972 / NCIMB 8545 / WDCM 00012 / Crooks), this protein is Chromosome partition protein MukB.